Reading from the N-terminus, the 229-residue chain is Large ribosomal subunit protein uL1 (229 aa).

The protein belongs to the universal ribosomal protein uL1 family. Part of the 50S ribosomal subunit.

Binds directly to 23S rRNA. The L1 stalk is quite mobile in the ribosome, and is involved in E site tRNA release. Functionally, protein L1 is also a translational repressor protein, it controls the translation of the L11 operon by binding to its mRNA. The sequence is that of Large ribosomal subunit protein uL1 from Mycoplasmopsis pulmonis (strain UAB CTIP) (Mycoplasma pulmonis).